The chain runs to 374 residues: MLVARERKYCSVCHQLGDGYHFGAIACKACAAFFRRTTSMNLAPKFVCRKKNECVIKMSSRDSCKSCRYAKCLHVGMNPEVVQAIQQAAKQANSPGIESLPSCSSSPASCNSPILSLELGDYDQMTPTLCGVMESYQKLYKKRYDLHAPKLTPRATNYGEFCKIYSNDVYLQFEFLEGSFPQFKEMGGFEKKHVFKYFFVSFLILEMGYRSYQEGTDAIVLANGDFIDTMNLDEFYYDPESLEKCKPTDAMKMYRPNFDQMKRNVFQPLSHQKLSLIEFLALVSLCTWNESLDGQPDCYYPSCRPVRQSVIADLKAFYEKDSPDVDPAYRLSGLLMLLPALERSVELFLQTMEVKRLFRCFPFHDKIYKIIDGQ.

The segment at residues 7–84 (RKYCSVCHQL…VGMNPEVVQA (78 aa)) is a DNA-binding region (nuclear receptor). 2 consecutive NR C4-type zinc fingers follow at residues 10–30 (CSVCHQLGDGYHFGAIACKAC) and 48–67 (CRKKNECVIKMSSRDSCKSC). The NR LBD domain maps to 124-374 (QMTPTLCGVM…DKIYKIIDGQ (251 aa)).

This sequence belongs to the nuclear hormone receptor family.

Its subcellular location is the nucleus. In terms of biological role, orphan nuclear receptor. The polypeptide is Nuclear hormone receptor family member nhr-57 (nhr-57) (Caenorhabditis elegans).